The following is a 116-amino-acid chain: Probable non-functional immunoglobulin kappa variable 3-7 (116 aa).

An N-terminal signal peptide occupies residues 1–21; sequence MEAPAQLLFLLLLWLPDTTRE. A framework-1 region spans residues 21–43; that stretch reads EIVMTQSPPTLSLSPGERVTLSC. An Ig-like domain is found at 22–116; sequence IVMTQSPPTL…YYCQQDYNLP (95 aa). Residues C43 and C109 are joined by a disulfide bond. A complementarity-determining-1 region spans residues 44-55; sequence RASQSVSSSYLT. Residues 56 to 70 are framework-2; sequence WYQQKPGQAPRLLIY. The complementarity-determining-2 stretch occupies residues 71 to 77; it reads GASTRAT. The interval 78–109 is framework-3; that stretch reads SIPARFSGSGSGTDFTLTISSLQPEDFAVYYC. The interval 110–116 is complementarity-determining-3; it reads QQDYNLP.

As to quaternary structure, immunoglobulins are composed of two identical heavy chains and two identical light chains; disulfide-linked.

The protein resides in the secreted. The protein localises to the cell membrane. Functionally, probable non-functional open reading frame (ORF) of V region of the variable domain of immunoglobulin light chains. Non-functional ORF generally cannot participate in the synthesis of a productive immunoglobulin chain due to altered V-(D)-J or switch recombination and/or splicing site (at mRNA level) and/or conserved amino acid change (protein level). Immunoglobulins, also known as antibodies, are membrane-bound or secreted glycoproteins produced by B lymphocytes. In the recognition phase of humoral immunity, the membrane-bound immunoglobulins serve as receptors which, upon binding of a specific antigen, trigger the clonal expansion and differentiation of B lymphocytes into immunoglobulins-secreting plasma cells. Secreted immunoglobulins mediate the effector phase of humoral immunity, which results in the elimination of bound antigens. The antigen binding site is formed by the variable domain of one heavy chain, together with that of its associated light chain. Thus, each immunoglobulin has two antigen binding sites with remarkable affinity for a particular antigen. The variable domains are assembled by a process called V-(D)-J rearrangement and can then be subjected to somatic hypermutations which, after exposure to antigen and selection, allow affinity maturation for a particular antigen. The polypeptide is Probable non-functional immunoglobulin kappa variable 3-7 (Homo sapiens (Human)).